A 276-amino-acid polypeptide reads, in one-letter code: MIVIGRSIVHPYITNEYEPFAAEKQQILSIMAGNQEVYSFRTADELSFDLNLRVNIIISALELFQSGFQFRTFQQSFCNPQYWKRTSLGGFELLPNIPPSIAIQDIFKNGKLYGTECATAMIIIFYKALLSLYEEETFNRLFANLLLYTWDYDQDLRLITKTGGDLVPGDLVYFKNPQVNPATIEWQGENTIYLGNFFFYGHGVGVKTKEEIIYSLNERRVPYAFISAFLTDTITRIDSRIMSQYASSSTPQTSISFIPIRDDAIVATVGHTTTIY.

This sequence belongs to the bacillus TGase family.

It catalyses the reaction L-glutaminyl-[protein] + L-lysyl-[protein] = [protein]-L-lysyl-N(6)-5-L-glutamyl-[protein] + NH4(+). Its function is as follows. Probably plays a role in the assembly of the spore coat proteins by catalyzing epsilon-(gamma-glutamyl)lysine cross-links. The protein is Protein-glutamine gamma-glutamyltransferase of Bacillus cereus (strain G9842).